The sequence spans 323 residues: Elongation factor P--(R)-beta-lysine ligase (323 aa).

Position 76-78 (76-78 (SPE)) interacts with substrate. ATP is bound by residues 100-102 (RNE) and N109. Y118 serves as a coordination point for substrate. 242 to 243 (EL) contacts ATP. E249 serves as a coordination point for substrate. G298 contacts ATP.

The protein belongs to the class-II aminoacyl-tRNA synthetase family. EpmA subfamily. In terms of assembly, homodimer.

It carries out the reaction D-beta-lysine + L-lysyl-[protein] + ATP = N(6)-((3R)-3,6-diaminohexanoyl)-L-lysyl-[protein] + AMP + diphosphate + H(+). Its function is as follows. With EpmB is involved in the beta-lysylation step of the post-translational modification of translation elongation factor P (EF-P). Catalyzes the ATP-dependent activation of (R)-beta-lysine produced by EpmB, forming a lysyl-adenylate, from which the beta-lysyl moiety is then transferred to the epsilon-amino group of a conserved specific lysine residue in EF-P. This Mannheimia succiniciproducens (strain KCTC 0769BP / MBEL55E) protein is Elongation factor P--(R)-beta-lysine ligase.